The sequence spans 523 residues: MKRSHQETSVEEEAPSMVEKLENGCGGGGDDNMDEFLAVLGYKVRSSDMADVAQKLEQLEMVLSNDIASSSNAFNDTVHYNPSDLSGWAQSMLSDLNYYPDLDPNRICDLRPITDDDECCSSNSNSNKRIRLGPWCDSVTSESTRSVVLIEETGVRLVQALVACAEAVQLENLSLADALVKRVGLLAASQAGAMGKVATYFAEALARRIYRIHPSAAAIDPSFEEILQMNFYDSCPYLKFAHFTANQAILEAVTTSRVVHVIDLGLNQGMQWPALMQALALRPGGPPSFRLTGVGNPSNREGIQELGWKLAQLAQAIGVEFKFNGLTTERLSDLEPDMFETRTESETLVVNSVFELHPVLSQPGSIEKLLATVKAVKPGLVTVVEQEANHNGDVFLDRFNEALHYYSSLFDSLEDGVVIPSQDRVMSEVYLGRQILNLVATEGSDRIERHETLAQWRKRMGSAGFDPVNLGSDAFKQASLLLALSGGGDGYRVEENDGSLMLAWQTKPLIAASAWKLAAELRR.

A disordered region spans residues 1–28 (MKRSHQETSVEEEAPSMVEKLENGCGGG). The DELLA motif signature appears at 34-38 (DEFLA). The short motif at 56-60 (LEQLE) is the LEXLE motif element. The VHYNP motif signature appears at 78–82 (VHYNP). A GRAS domain is found at 148–516 (VLIEETGVRL…KPLIAASAWK (369 aa)). Positions 155–209 (VRLVQALVACAEAVQLENLSLADALVKRVGLLAASQAGAMGKVATYFAEALARRI) are leucine repeat I (LRI). Positions 228 to 293 (QMNFYDSCPY…GGPPSFRLTG (66 aa)) are VHIID. The short motif at 259-263 (VHVID) is the VHIID element. Residues 305 to 337 (ELGWKLAQLAQAIGVEFKFNGLTTERLSDLEPD) form a leucine repeat II (LRII) region. Residues 348–437 (LVVNSVFELH…EVYLGRQILN (90 aa)) form a PFYRE region. Residues 356–360 (LHPVL) carry the LXXLL motif motif. The SAW stretch occupies residues 440 to 516 (ATEGSDRIER…KPLIAASAWK (77 aa)).

The protein belongs to the GRAS family. DELLA subfamily. Interacts directly with the GID2/SLY1 component of the SCF(GID2) complex, suggesting that it may be ubiquitinated. Interacts (via N-terminus) with GID1A, GID1B and GID1B (via N-terminus). Interacts with the BOI proteins BOI, BRG1, BRG2 and BRG3. Post-translationally, phosphorylated. May be ubiquitinated. Expressed at very low level. Mainly expressed in germinating seeds and flowers and siliques. Not expressed in other tissues.

It is found in the nucleus. Its function is as follows. Probable transcriptional regulator that acts as a repressor of the gibberellin (GA) signaling pathway. No effect of the BOI proteins on its stability. Probably acts by participating in large multiprotein complexes that repress transcription of GA-inducible genes. Its activity may be regulated by phytohormones such as auxin and ethylene. The protein is DELLA protein RGL3 (RGL3) of Arabidopsis thaliana (Mouse-ear cress).